A 513-amino-acid polypeptide reads, in one-letter code: Flavonoid 3',5'-hydroxylase (513 aa).

Position 446 (C446) interacts with heme.

It belongs to the cytochrome P450 family. Heme serves as cofactor. Hypocotyl tissues.

The enzyme catalyses a 3',5'-unsubstituted flavanone + 2 reduced [NADPH--hemoprotein reductase] + 2 O2 = a 3',5'-dihydroxyflavanone + 2 oxidized [NADPH--hemoprotein reductase] + 2 H2O + 2 H(+). It functions in the pathway pigment biosynthesis; anthocyanin biosynthesis. Functionally, catalyzes the 3'5'-hydroxylation of naringenin and eriodictyol to form 5,7,3,'4',5'-pentahydroxyflavanone and 3',5'-hydroxylation of dihydrokaempferol and dihydroquercetin to form dihydromyricetin. The sequence is that of Flavonoid 3',5'-hydroxylase (CYP75A2) from Solanum melongena (Eggplant).